A 269-amino-acid chain; its full sequence is Mediator of RNA polymerase II transcription subunit 8 (269 aa).

The tract at residues 187–217 (RVLEDDDEEDESDSEEGEGEADEMEVVGARR) is disordered. Residues 190-211 (EDDDEEDESDSEEGEGEADEME) show a composition bias toward acidic residues.

It belongs to the Mediator complex subunit 8 family. In terms of assembly, component of the Mediator complex.

It is found in the nucleus. In terms of biological role, component of the Mediator complex, a coactivator involved in the regulated transcription of nearly all RNA polymerase II-dependent genes. Mediator functions as a bridge to convey information from gene-specific regulatory proteins to the basal RNA polymerase II transcription machinery. Mediator is recruited to promoters by direct interactions with regulatory proteins and serves as a scaffold for the assembly of a functional preinitiation complex with RNA polymerase II and the general transcription factors. The chain is Mediator of RNA polymerase II transcription subunit 8 (med8) from Aspergillus niger (strain ATCC MYA-4892 / CBS 513.88 / FGSC A1513).